A 99-amino-acid chain; its full sequence is MALTKAEMAEHLFEKLGINKRDAKDLVELFFEEIKGALESGEQVKLSGFGNFDLRDKNERPGRNPKTGEDIPIKARRVVTFRPGQKLKSRVENSEPVDQ.

The protein belongs to the bacterial histone-like protein family. As to quaternary structure, heterodimer of an alpha and a beta chain.

Functionally, this protein is one of the two subunits of integration host factor, a specific DNA-binding protein that functions in genetic recombination as well as in transcriptional and translational control. This Alteromonas mediterranea (strain DSM 17117 / CIP 110805 / LMG 28347 / Deep ecotype) protein is Integration host factor subunit alpha.